A 285-amino-acid polypeptide reads, in one-letter code: Probable enoyl-CoA hydratase echA12 (285 aa).

This sequence belongs to the enoyl-CoA hydratase/isomerase family.

It carries out the reaction a (3S)-3-hydroxyacyl-CoA = a (2E)-enoyl-CoA + H2O. It catalyses the reaction a 4-saturated-(3S)-3-hydroxyacyl-CoA = a (3E)-enoyl-CoA + H2O. Could possibly oxidize fatty acids using specific components. The sequence is that of Probable enoyl-CoA hydratase echA12 (echA12) from Mycobacterium tuberculosis (strain CDC 1551 / Oshkosh).